Here is a 979-residue protein sequence, read N- to C-terminus: Pheromone-regulated membrane protein 10 (979 aa).

5 disordered regions span residues 1–279, 295–318, 337–411, 432–451, and 491–528; these read MGKS…FFSK, LRNV…EVDG, YSSL…PQRV, FSTA…PLLD, and ATKH…LPKF. Basic and acidic residues predominate over residues 15 to 26; it reads GGKDARSPETRS. Over residues 29 to 38 the composition is skewed to low complexity; sequence SRSSTDNRSS. Residues 54–68 are compositionally biased toward acidic residues; the sequence is LDLEEGVDDDADFDW. Residues 77 to 86 show a composition bias toward polar residues; sequence DAQSLDNPFN. Positions 105–115 are enriched in basic and acidic residues; sequence AIERDAVDTIR. The segment covering 122-135 has biased composition (acidic residues); that stretch reads EEPDSASDGEDVGM. Basic and acidic residues-rich tracts occupy residues 138-148 and 158-175; these read EYQRKRERLVD and SPRR…HTET. The segment covering 192–213 has biased composition (polar residues); sequence EAGTGTNENGEASSSGMKSSIN. Residues 253–263 show a composition bias toward basic and acidic residues; sequence GAEKGMKSMKD. Residues 360–372 are compositionally biased toward low complexity; that stretch reads SPSTPSSSPGPES. Residues 379–395 are compositionally biased toward acidic residues; it reads DDYDFDQVDSDGEDSDL. Residues 503-515 show a composition bias toward polar residues; it reads ASGSNSELPSFKN. Residues 516–528 are compositionally biased toward basic residues; sequence TRPKKNKKHLPKF. The next 10 helical transmembrane spans lie at 658 to 678, 680 to 700, 710 to 730, 734 to 754, 773 to 793, 809 to 829, 832 to 852, 864 to 884, 886 to 906, and 946 to 966; these read WVCV…AFGG, WVNL…QFIV, VFEI…GSIG, ICFG…YIIL, FYAI…AALF, PISP…ISLI, AHWI…VVTY, FTAS…SRVW, GLAV…GVAS, and ITMI…SLIV.

This sequence belongs to the ThrE exporter (TC 2.A.79) family.

It is found in the membrane. In Zygosaccharomyces rouxii (strain ATCC 2623 / CBS 732 / NBRC 1130 / NCYC 568 / NRRL Y-229), this protein is Pheromone-regulated membrane protein 10.